We begin with the raw amino-acid sequence, 326 residues long: Undecaprenyl-diphosphatase (326 aa).

A run of 9 helical transmembrane segments spans residues 11 to 31, 42 to 62, 90 to 110, 138 to 158, 165 to 185, 212 to 232, 242 to 262, 272 to 292, and 304 to 324; these read AFSLSVAIAVVYHQAWGIAVA, TGVISNGISINLFQAFVLGFI, GVAFTAVIQLGSIGAVFWYFW, LGIGLGTIPIVFFGLLMKLLV, FFRSLSTIAIASIVMALLLAL, ALALIPGVSRSGSTLTAGLFI, FSFLLGIPAITIAGLVELKGL, ILPLIVGTISSAVFSYLAIAW, and IFVWYRLIFGVVILTALGMGF.

Belongs to the UppP family.

The protein localises to the cell inner membrane. The enzyme catalyses di-trans,octa-cis-undecaprenyl diphosphate + H2O = di-trans,octa-cis-undecaprenyl phosphate + phosphate + H(+). Catalyzes the dephosphorylation of undecaprenyl diphosphate (UPP). Confers resistance to bacitracin. This is Undecaprenyl-diphosphatase from Synechocystis sp. (strain ATCC 27184 / PCC 6803 / Kazusa).